The following is a 199-amino-acid chain: CASP-like protein 4C1 (199 aa).

Topologically, residues M1 to T35 are cytoplasmic. A helical membrane pass occupies residues M36–G56. Residues T57–R80 are Extracellular-facing. The helical transmembrane segment at Y81–V101 threads the bilayer. At Y102 to D124 the chain is on the cytoplasmic side. The chain crosses the membrane as a helical span at residues Q125 to L145. Over Q146–R169 the chain is Extracellular. The chain crosses the membrane as a helical span at residues V170–G190. The Cytoplasmic segment spans residues L191 to P199.

This sequence belongs to the Casparian strip membrane proteins (CASP) family. In terms of assembly, homodimer and heterodimers.

It is found in the cell membrane. The protein is CASP-like protein 4C1 of Physcomitrium patens (Spreading-leaved earth moss).